We begin with the raw amino-acid sequence, 160 residues long: ATP synthase subunit b 3 (160 aa).

The chain crosses the membrane as a helical span at residues 5 to 25 (PTFWVLVAFVLFVAAVWRIAA).

Belongs to the ATPase B chain family. F-type ATPases have 2 components, F(1) - the catalytic core - and F(0) - the membrane proton channel. F(1) has five subunits: alpha(3), beta(3), gamma(1), delta(1), epsilon(1). F(0) has three main subunits: a(1), b(2) and c(10-14). The alpha and beta chains form an alternating ring which encloses part of the gamma chain. F(1) is attached to F(0) by a central stalk formed by the gamma and epsilon chains, while a peripheral stalk is formed by the delta and b chains.

It localises to the cell inner membrane. Functionally, f(1)F(0) ATP synthase produces ATP from ADP in the presence of a proton or sodium gradient. F-type ATPases consist of two structural domains, F(1) containing the extramembraneous catalytic core and F(0) containing the membrane proton channel, linked together by a central stalk and a peripheral stalk. During catalysis, ATP synthesis in the catalytic domain of F(1) is coupled via a rotary mechanism of the central stalk subunits to proton translocation. Component of the F(0) channel, it forms part of the peripheral stalk, linking F(1) to F(0). The sequence is that of ATP synthase subunit b 3 from Rhodospirillum centenum (strain ATCC 51521 / SW).